Here is a 232-residue protein sequence, read N- to C-terminus: Enolase-phosphatase E1 (232 aa).

It belongs to the HAD-like hydrolase superfamily. MasA/MtnC family. As to quaternary structure, monomer. Requires Mg(2+) as cofactor.

It carries out the reaction 5-methylsulfanyl-2,3-dioxopentyl phosphate + H2O = 1,2-dihydroxy-5-(methylsulfanyl)pent-1-en-3-one + phosphate. It participates in amino-acid biosynthesis; L-methionine biosynthesis via salvage pathway; L-methionine from S-methyl-5-thio-alpha-D-ribose 1-phosphate: step 3/6. It functions in the pathway amino-acid biosynthesis; L-methionine biosynthesis via salvage pathway; L-methionine from S-methyl-5-thio-alpha-D-ribose 1-phosphate: step 4/6. Functionally, bifunctional enzyme that catalyzes the enolization of 2,3-diketo-5-methylthiopentyl-1-phosphate (DK-MTP-1-P) into the intermediate 2-hydroxy-3-keto-5-methylthiopentenyl-1-phosphate (HK-MTPenyl-1-P), which is then dephosphorylated to form the acireductone 1,2-dihydroxy-3-keto-5-methylthiopentene (DHK-MTPene). The protein is Enolase-phosphatase E1 of Xanthomonas axonopodis pv. citri (strain 306).